The chain runs to 386 residues: Convicilin (386 aa).

An N-terminal signal peptide occupies residues 1 to 29 (MATTIKSRFPLLLLLGIIFLASVVSVTYA). Residues 33-199 (EGSEPRVPAQ…EERSSESQER (167 aa)) form a disordered region. Composition is skewed to basic and acidic residues over residues 41–65 (AQRERGRQEGEKEEKRHGEWRPSYE), 74–91 (QRERGRQEGEKEEKRHGE), 104–144 (EKQK…RWER), and 153–186 (EEWRGSQRREDPEERARLRHREERTKRDRRHQRE). The Cupin type-1 domain maps to 202–359 (PFLFKSNKFL…SYNTRYETIE (158 aa)). Residues 367–386 (EKDRKRRQQGEETDAIVKVS) are disordered.

Belongs to the 7S seed storage protein family.

The protein resides in the vacuole. It localises to the aleurone grain. In terms of biological role, seed storage protein. In Pisum sativum (Garden pea), this protein is Convicilin (CVCB).